A 588-amino-acid polypeptide reads, in one-letter code: 2-isopropylmalate synthase (588 aa).

In terms of domain architecture, Pyruvate carboxyltransferase spans 40-314; it reads PRWCAVDLRD…DPQIDFSDLD (275 aa). Mg(2+) contacts are provided by D49, H253, H255, and N289. Residues 456–588 form a regulatory domain region; that stretch reads APLDRVEEKW…TVREPELAAV (133 aa).

The protein belongs to the alpha-IPM synthase/homocitrate synthase family. LeuA type 2 subfamily. As to quaternary structure, homodimer. Mg(2+) serves as cofactor.

The protein localises to the cytoplasm. The catalysed reaction is 3-methyl-2-oxobutanoate + acetyl-CoA + H2O = (2S)-2-isopropylmalate + CoA + H(+). Its pathway is amino-acid biosynthesis; L-leucine biosynthesis; L-leucine from 3-methyl-2-oxobutanoate: step 1/4. Functionally, catalyzes the condensation of the acetyl group of acetyl-CoA with 3-methyl-2-oxobutanoate (2-ketoisovalerate) to form 3-carboxy-3-hydroxy-4-methylpentanoate (2-isopropylmalate). The protein is 2-isopropylmalate synthase of Clavibacter sepedonicus (Clavibacter michiganensis subsp. sepedonicus).